The following is a 377-amino-acid chain: Chaperone protein DnaJ (377 aa).

The region spanning Asp5–Gly70 is the J domain. Residues Gly130 to His208 form a CR-type zinc finger. Residues Cys143, Cys146, Cys160, Cys163, Cys182, Cys185, Cys196, and Cys199 each contribute to the Zn(2+) site. CXXCXGXG motif repeat units lie at residues Cys143–Gly150, Cys160–Gly167, Cys182–Gly189, and Cys196–Gly203.

The protein belongs to the DnaJ family. Homodimer. Zn(2+) serves as cofactor.

Its subcellular location is the cytoplasm. In terms of biological role, participates actively in the response to hyperosmotic and heat shock by preventing the aggregation of stress-denatured proteins and by disaggregating proteins, also in an autonomous, DnaK-independent fashion. Unfolded proteins bind initially to DnaJ; upon interaction with the DnaJ-bound protein, DnaK hydrolyzes its bound ATP, resulting in the formation of a stable complex. GrpE releases ADP from DnaK; ATP binding to DnaK triggers the release of the substrate protein, thus completing the reaction cycle. Several rounds of ATP-dependent interactions between DnaJ, DnaK and GrpE are required for fully efficient folding. Also involved, together with DnaK and GrpE, in the DNA replication of plasmids through activation of initiation proteins. In Thioalkalivibrio sulfidiphilus (strain HL-EbGR7), this protein is Chaperone protein DnaJ.